We begin with the raw amino-acid sequence, 150 residues long: Arginine repressor (150 aa).

This sequence belongs to the ArgR family.

The protein localises to the cytoplasm. Its pathway is amino-acid biosynthesis; L-arginine biosynthesis [regulation]. Its function is as follows. Regulates arginine biosynthesis genes. The protein is Arginine repressor of Clostridium botulinum (strain Okra / Type B1).